The chain runs to 179 residues: Large ribosomal subunit protein uL5 (179 aa).

Belongs to the universal ribosomal protein uL5 family. Part of the 50S ribosomal subunit; part of the 5S rRNA/L5/L18/L25 subcomplex. Contacts the 5S rRNA and the P site tRNA. Forms a bridge to the 30S subunit in the 70S ribosome.

Functionally, this is one of the proteins that bind and probably mediate the attachment of the 5S RNA into the large ribosomal subunit, where it forms part of the central protuberance. In the 70S ribosome it contacts protein S13 of the 30S subunit (bridge B1b), connecting the 2 subunits; this bridge is implicated in subunit movement. Contacts the P site tRNA; the 5S rRNA and some of its associated proteins might help stabilize positioning of ribosome-bound tRNAs. The sequence is that of Large ribosomal subunit protein uL5 from Bordetella avium (strain 197N).